An 89-amino-acid polypeptide reads, in one-letter code: Large ribosomal subunit protein uL23cz/uL23cy (89 aa).

Belongs to the universal ribosomal protein uL23 family. Part of the 50S ribosomal subunit.

The protein resides in the plastid. Its subcellular location is the chloroplast. In terms of biological role, binds to 23S rRNA. The chain is Large ribosomal subunit protein uL23cz/uL23cy (rpl23-A) from Pelargonium hortorum (Common geranium).